Here is a 144-residue protein sequence, read N- to C-terminus: Large ribosomal subunit protein uL15 (144 aa).

Residues 1-53 form a disordered region; it reads MRLNTLSPAEGAKHAPKRLGRGIGSGLGKTGGRGHKGQNSRSGGGVRRGFEGG. The segment covering 21 to 31 has biased composition (gly residues); that stretch reads RGIGSGLGKTG.

Belongs to the universal ribosomal protein uL15 family. In terms of assembly, part of the 50S ribosomal subunit.

Binds to the 23S rRNA. This is Large ribosomal subunit protein uL15 from Pectobacterium atrosepticum (strain SCRI 1043 / ATCC BAA-672) (Erwinia carotovora subsp. atroseptica).